The primary structure comprises 264 residues: Elongation factor Ts (264 aa).

Residues 76–79 (TDFV) form an involved in Mg(2+) ion dislocation from EF-Tu region.

It belongs to the EF-Ts family.

Its subcellular location is the cytoplasm. Functionally, associates with the EF-Tu.GDP complex and induces the exchange of GDP to GTP. It remains bound to the aminoacyl-tRNA.EF-Tu.GTP complex up to the GTP hydrolysis stage on the ribosome. This Deinococcus deserti (strain DSM 17065 / CIP 109153 / LMG 22923 / VCD115) protein is Elongation factor Ts.